Consider the following 271-residue polypeptide: Putative glucose-6-phosphate 1-epimerase (271 aa).

Substrate contacts are provided by Arg-71 and Arg-93. His-151 is an active-site residue. Asp-193 serves as a coordination point for substrate. Glu-249 is a catalytic residue.

The protein belongs to the glucose-6-phosphate 1-epimerase family.

The catalysed reaction is alpha-D-glucose 6-phosphate = beta-D-glucose 6-phosphate. The protein is Putative glucose-6-phosphate 1-epimerase of Haemophilus influenzae (strain ATCC 51907 / DSM 11121 / KW20 / Rd).